The sequence spans 228 residues: L-ribulose-5-phosphate 4-epimerase UlaF (228 aa).

Substrate is bound by residues 26–27 (GN), 43–44 (SG), and 72–73 (SS). Positions 74, 93, and 95 each coordinate Zn(2+). Asp118 serves as the catalytic Proton donor/acceptor. Position 167 (His167) interacts with Zn(2+). The Proton donor/acceptor role is filled by Tyr225.

Belongs to the aldolase class II family. AraD/FucA subfamily. Zn(2+) serves as cofactor.

It catalyses the reaction L-ribulose 5-phosphate = D-xylulose 5-phosphate. Its pathway is cofactor degradation; L-ascorbate degradation; D-xylulose 5-phosphate from L-ascorbate: step 4/4. Its function is as follows. Catalyzes the isomerization of L-ribulose 5-phosphate to D-xylulose 5-phosphate. Is involved in the anaerobic L-ascorbate utilization. This chain is L-ribulose-5-phosphate 4-epimerase UlaF, found in Shigella flexneri.